The chain runs to 371 residues: uncharacterized protein (371 aa).

A helical transmembrane segment spans residues 17-33 (FLLFSVVLIIVMTTLVF).

This sequence to S.pombe SpBC4C3.08 and SpBC4C3.09.

The protein resides in the membrane. This is an uncharacterized protein from Schizosaccharomyces pombe (strain 972 / ATCC 24843) (Fission yeast).